Reading from the N-terminus, the 217-residue chain is uncharacterized protein (217 aa).

Transmembrane regions (helical) follow at residues 4-23 (IYGI…GKET), 44-66 (NVVI…LTWV), 76-98 (TVET…SIII), 111-128 (FLYL…IHAI), 132-154 (MAMV…PLAL), 166-188 (AGTA…IVLF), and 198-215 (LLLS…ALQL).

It localises to the cell membrane. This is an uncharacterized protein from Archaeoglobus fulgidus (strain ATCC 49558 / DSM 4304 / JCM 9628 / NBRC 100126 / VC-16).